The primary structure comprises 490 residues: MILPCESFNGVPSGCLIIEMNWYSVLKASTAIFFPEKYSSSTSSLSKRSPISAPMINVDGEYLKIFAGRIKLMKAVILAAGLGTRLGGVPKPLVRVGGCEIILRTMKLLSPHVSEFIIVASRYADDIDAFLKDKGFNYKIVRHDRPEKGNGYSLLVAKNHVEDRFILTMGDHVYSQQFIEKAVRGEGVIADREPRFVDIGEATKIRVEDGRVAKIGKDLREFDCVDTGFFVLDDSIFEHAEKLRDREEIPLSEIVKLARLPVTYVDGELWMDVDTKEDVRRANRALVSAAVKGSGDGFISRKINRKISTRISAAIVNKVNPNQMTLISFLVGAFSALASFFSIPLAGLLYQFSSILDGCDGEIARASLKMSKKGGYVDSILDRFVDFLFLAIIALLYPKTATVAMFAIFGSVMVSYTSEKYKAEFGESIFGKFRVLNYIPGKRDERIFLIMIFCLLSAISLQWIFWMFLFVAAISLTRVVVTLLAVLVSK.

Residues 72-290 form a mobA-like NTP transferase region; that stretch reads LMKAVILAAG…RANRALVSAA (219 aa). CTP-binding positions include 78–80, K91, D144, and E180; that span reads LAA. Residue E180 participates in Mg(2+) binding. Residues 291–490 form a CDP-alcohol phosphatidyltransferases region; sequence VKGSGDGFIS…VTLLAVLVSK (200 aa). 4 helical membrane-spanning segments follow: residues 329 to 349, 389 to 409, 447 to 467, and 468 to 488; these read FLVGAFSALASFFSIPLAGLL, FLAIIALLYPKTATVAMFAIF, IFLIMIFCLLSAISLQWIFWM, and FLFVAAISLTRVVVTLLAVLV.

In the N-terminal section; belongs to the MobA family. The protein in the C-terminal section; belongs to the CDP-alcohol phosphatidyltransferase class-I family. In terms of assembly, forms a mixture of monomers and dimers in solution, with prevalence of the monomeric form. Mg(2+) is required as a cofactor.

The protein resides in the membrane. It catalyses the reaction 1D-myo-inositol 3-phosphate + CTP + H(+) = CDP-1L-myo-inositol + diphosphate. It carries out the reaction CDP-1L-myo-inositol + 1D-myo-inositol 3-phosphate = bis(1L-myo-inositol) 3,1'-phosphate 1-phosphate + CMP + H(+). In terms of biological role, involved in biosynthesis of di-myo-inositol phosphate (DIP), a widespread organic solute in microorganisms adapted to hot environments. Catalyzes the condensation of CTP and L-myo-inositol-1-phosphate into CDP-L-myo-inositol, as well as the biosynthesis of di-myo-inositol-1,3'-phosphate-1'-phosphate (DIPP) from CDP-L-myo-inositol and L-myo-inositol-1-phosphate. The cytidylyltransferase is absolutely specific for CTP and L-myo-inositol-1-P. The DIPP synthase uses only L-myoinositol-1-phosphate as an alcohol acceptor, but CDP-glycerol, as well as CDP-L-myo-inositol and CDP-D-myoinositol, are recognized as alcohol donors. This Archaeoglobus fulgidus (strain ATCC 49558 / DSM 4304 / JCM 9628 / NBRC 100126 / VC-16) protein is Bifunctional IPC transferase and DIPP synthase.